Reading from the N-terminus, the 151-residue chain is Globin-2 B chain (151 aa).

Ser-1 carries the post-translational modification N-acetylserine. The 141-residue stretch at 11–151 (VSNADQKDLL…SLVAVVQASL (141 aa)) folds into the Globin domain. Heme b is bound at residue His-103.

It belongs to the globin family. In terms of assembly, heterotetramer of two alpha chains and two beta chains.

The sequence is that of Globin-2 B chain from Anadara inaequivalvis (Inequivalve ark).